The chain runs to 198 residues: Recombination protein RecR (198 aa).

The C4-type zinc-finger motif lies at 58 to 73; sequence CSVCGNFTDKDPCAIC. Positions 81-175 constitute a Toprim domain; the sequence is SIICVIEQPK…KVTRIAHGVP (95 aa).

This sequence belongs to the RecR family.

May play a role in DNA repair. It seems to be involved in an RecBC-independent recombinational process of DNA repair. It may act with RecF and RecO. This chain is Recombination protein RecR, found in Clostridium botulinum (strain ATCC 19397 / Type A).